Reading from the N-terminus, the 443-residue chain is Methyl-coenzyme M reductase subunit beta (443 aa).

Y367 lines the coenzyme M pocket. Coenzyme B is bound at residue G369.

This sequence belongs to the methyl-coenzyme M reductase beta subunit family. As to quaternary structure, MCR is a hexamer of two alpha, two beta, and two gamma chains, forming a dimer of heterotrimers. The cofactor is coenzyme F430.

The protein localises to the cytoplasm. The catalysed reaction is coenzyme B + methyl-coenzyme M = methane + coenzyme M-coenzyme B heterodisulfide. It functions in the pathway one-carbon metabolism; methyl-coenzyme M reduction; methane from methyl-coenzyme M: step 1/1. In terms of biological role, component of the methyl-coenzyme M reductase (MCR) I that catalyzes the reductive cleavage of methyl-coenzyme M (CoM-S-CH3 or 2-(methylthio)ethanesulfonate) using coenzyme B (CoB or 7-mercaptoheptanoylthreonine phosphate) as reductant which results in the production of methane and the mixed heterodisulfide of CoB and CoM (CoM-S-S-CoB). This is the final step in methanogenesis. In Methanococcus voltae, this protein is Methyl-coenzyme M reductase subunit beta (mcrB).